The following is a 273-amino-acid chain: Urease accessory protein UreD (273 aa).

The protein belongs to the UreD family. UreD, UreF and UreG form a complex that acts as a GTP-hydrolysis-dependent molecular chaperone, activating the urease apoprotein by helping to assemble the nickel containing metallocenter of UreC. The UreE protein probably delivers the nickel.

The protein localises to the cytoplasm. Its function is as follows. Required for maturation of urease via the functional incorporation of the urease nickel metallocenter. This Rhizobium rhizogenes (strain K84 / ATCC BAA-868) (Agrobacterium radiobacter) protein is Urease accessory protein UreD.